Here is a 372-residue protein sequence, read N- to C-terminus: MEVIQPTTQIFADNEKTVSQVAEEISSNELRETTVYLPDLFVSFCSRAPKTNPYYAEVKAESDAWFAKLYSLSTEKELSRLTKADFALFAAWWTADAGKSEFRTICDWCNWVFYFDDQFDEGHLCEDEAKAQREADILTQIMTVGLRDDEYPDDLPRARALRYAFRSVWERISQRASAGVQRRFREAMQEFCKGLVGQVGVRADIDTRELDPYLAFRRQSIGVVPCIVFAEYYHDLRLPDEFFEHPSVKTIMDLAAEITVLHNDVLSYHKEYEMGAIHNIVIILRERGMTQQEAYNETDKLIQKRLREWHLAVNQLPFYGEALDLQVQKFVQACQEVAVGNLHWSFATERYFGNQNNLIRKTRQVELIDLKA.

5 residues coordinate Mg(2+): Asp116, Glu121, Asn263, Ser267, and Glu271. The DDXXE motif motif lies at Asp116 to Glu121.

This sequence belongs to the terpene synthase family. Mg(2+) is required as a cofactor.

It carries out the reaction (2E,6E)-farnesyl diphosphate = silphinene + diphosphate. It participates in secondary metabolite biosynthesis; terpenoid biosynthesis. Functionally, sesquiterpene cyclase; part of the gene cluster that mediates the biosynthesis of penifulvin A, a potent insecticidal sesquiterpene that features a [5.5.5.6]dioxafenestrane ring. Within the pathway, peniA catalyzes the first step and generates the angular triquinane scaffold silphinene via cyclization of the linear farnesyl pyrophosphate (FPP). The cytochrome P450 monooxygenase peniB and the flavin-dependent monooxygenase peniC then catalyze a series of oxidation reactions to transform silphinene into penifulvin A. The sequence is that of Silphinene synthase peniA from Penicillium patulum (Penicillium griseofulvum).